The following is a 462-amino-acid chain: Chitinase-like mite allergen Der f 18.0101 (462 aa).

A signal peptide spans 1–25 (MTRFSLTVLAVLAACFGSNIRPNVA). Residues 29–378 (PKTVCYYESW…HAIQSNYYHG (350 aa)) form the GH18 domain. The cysteines at positions 33 and 58 are disulfide-linked. Residue Asn-338 is glycosylated (N-linked (GlcNAc...) asparagine). In terms of domain architecture, Chitin-binding type-2 spans 404-462 (VFHCHEEGFFRDKTYCATYYECKKGDFGLEKTVHHCANHLQAFDEVSRTCIDHTKIPGC). A disulfide bond links Cys-439 and Cys-453.

Belongs to the glycosyl hydrolase 18 family. Chitinase class II subfamily. As to expression, expressed in the upper digestive tract. Staining is observed in the ventriculus, and in very rare individuals, also in the intestine or esophagus. No expression in fecal pellets neither inside the rectum nor defecated outside of the body.

The protein localises to the secreted. Its function is as follows. Probably a non-catalytic chitinase-like protein, which binds to insoluble chitin and enhances the activity of the catalytic chitinases. Has weak chitin-binding activity. This is Chitinase-like mite allergen Der f 18.0101 from Dermatophagoides farinae (American house dust mite).